We begin with the raw amino-acid sequence, 399 residues long: P2X purinoceptor 1 (399 aa).

Residues 1 to 28 (MARRLQDELSAFFFEYDTPRMVLVRNKK) are Cytoplasmic-facing. Residues 29-50 (VGVIFRLIQLVVLVYVIGWVFV) form a helical membrane-spanning segment. Residues 51 to 338 (YEKGYQTSSD…IPTMTTIGSG (288 aa)) are Extracellular-facing. CTP contacts are provided by Lys68, Lys70, and Lys140. Lys70 is a binding site for ATP. Cystine bridges form between Cys117–Cys165, Cys126–Cys149, and Cys132–Cys159. N-linked (GlcNAc...) asparagine glycans are attached at residues Asn153 and Asn184. Thr186 provides a ligand contact to CTP. Thr186 lines the ATP pocket. Residue Asn210 is glycosylated (N-linked (GlcNAc...) asparagine). Cystine bridges form between Cys217/Cys227 and Cys261/Cys270. The ATP site is built by Ser286, Asn290, and Arg292. Positions 290 and 292 each coordinate CTP. Asn300 carries N-linked (GlcNAc...) asparagine glycosylation. Lys309 contacts CTP. Lys309 contributes to the ATP binding site. The pore-forming motif stretch occupies residues 331–338 (TMTTIGSG). Residues 339–358 (IGIFGVATVLCDLLLLHILP) traverse the membrane as a helical segment. At 359-399 (KRHYYKQKKFKYAEDMGPGEGEHDPVATSSTLGLQENMRTS) the chain is on the cytoplasmic side. The segment at 374 to 399 (MGPGEGEHDPVATSSTLGLQENMRTS) is disordered. A compositionally biased stretch (polar residues) spans 385 to 399 (ATSSTLGLQENMRTS). Residues Ser387 and Ser388 each carry the phosphoserine modification. Thr389 is subject to Phosphothreonine.

This sequence belongs to the P2X receptor family. As to quaternary structure, functional P2XRs are organized as homomeric and heteromeric trimers. Homotrimer. Forms heterodimer with P2RX2. Forms heterodimer with P2RX4. Forms heterodimer with P2RX5. In terms of tissue distribution, high levels in vas deferens and urinary bladder. Lower extent in spinal cord, coeliac ganglion, lung and spleen (probably in the smooth muscle part of both organs).

The protein localises to the cell membrane. It carries out the reaction Ca(2+)(in) = Ca(2+)(out). The enzyme catalyses K(+)(in) = K(+)(out). The catalysed reaction is Na(+)(in) = Na(+)(out). With respect to regulation, activated by low concentrations of ATP (&lt;1 uM). Undergoes rapid desensitisation. Sensitives to the ATP agonist:alpha/beta-methylene-ATP. Modulated by cholesterol. Functionally, ATP-gated nonselective transmembrane cation channel permeable to potassium, sodium and with relatively high calcium permeability. Furthermore, CTP functions as a weak affinity agonist for P2RX1. Plays a role a role in urogenital, immune and cardiovascular function. Specifically, plays an important role in neurogenic contraction of smooth muscle of the vas deferens, and therefore is essential for normal male reproductive function. In addition, contributes to smooth muscle contractions of the urinary bladder. On platelets, contributes to platelet activation and aggregation and thereby, also to thrombosis. On neutrophils, it is involved in chemotaxis and in mitigating the activation of circulating cells. The polypeptide is P2X purinoceptor 1 (P2rx1) (Rattus norvegicus (Rat)).